We begin with the raw amino-acid sequence, 543 residues long: Tubby-related protein 1 (543 aa).

Residues 1-290 (MPLQEETLRE…RASSPPVEVG (290 aa)) form a disordered region. 2 stretches are compositionally biased toward basic and acidic residues: residues 46–56 (PETPDSLESKP) and 86–99 (FLRD…DPRE). Acidic residues-rich tracts occupy residues 110–132 (GGEE…EEEE) and 244–255 (KKEEEEEVEEEV). A compositionally biased stretch (basic residues) spans 267-276 (GRAKGKGKKK).

Belongs to the TUB family. As to quaternary structure, homodimer. May interact with ABCF1, PSIP1, ZEB1 and HMGB2 (Potential). Interacts with F-actin. Interacts with DNM1. Interacts with TUB. Interacts with TYRO3. In terms of tissue distribution, retina specific. Detected in the outer plexiform layer in photoreceptor cells (at protein level).

The protein resides in the cytoplasm. Its subcellular location is the cell membrane. It localises to the secreted. The protein localises to the synapse. Functionally, required for normal development of photoreceptor synapses. Required for normal photoreceptor function and for long-term survival of photoreceptor cells. Interacts with cytoskeleton proteins and may play a role in protein transport in photoreceptor cells. Binds lipids, especially phosphatidylinositol 3-phosphate, phosphatidylinositol 4-phosphate, phosphatidylinositol 5-phosphate, phosphatidylinositol 3,4-bisphosphate, phosphatidylinositol 4,5-bisphosphate, phosphatidylinositol 3,4,5-bisphosphate, phosphatidylserine and phosphatidic acid (in vitro). Contribute to stimulation of phagocytosis of apoptotic retinal pigment epithelium (RPE) cells and macrophages. This is Tubby-related protein 1 (Tulp1) from Mus musculus (Mouse).